Consider the following 541-residue polypeptide: Membrane protein insertase YidC (541 aa).

5 consecutive transmembrane segments (helical) span residues leucine 7–tyrosine 27, leucine 345–tyrosine 365, leucine 415–phenylalanine 435, leucine 453–leucine 473, and phenylalanine 492–tryptophan 512.

Belongs to the OXA1/ALB3/YidC family. Type 1 subfamily. As to quaternary structure, interacts with the Sec translocase complex via SecD. Specifically interacts with transmembrane segments of nascent integral membrane proteins during membrane integration.

Its subcellular location is the cell inner membrane. In terms of biological role, required for the insertion and/or proper folding and/or complex formation of integral membrane proteins into the membrane. Involved in integration of membrane proteins that insert both dependently and independently of the Sec translocase complex, as well as at least some lipoproteins. Aids folding of multispanning membrane proteins. The polypeptide is Membrane protein insertase YidC (Histophilus somni (strain 129Pt) (Haemophilus somnus)).